Consider the following 294-residue polypeptide: Factor associated with metabolism and energy (294 aa).

Over residues 1–12 the composition is skewed to basic residues; sequence MGLGHSKAHPRV. Disordered stretches follow at residues 1 to 28 and 255 to 279; these read MGLG…TPST and FWDS…LVRT. Gly2 is lipidated: N-myristoyl glycine. The span at 17 to 28 shows a compositional bias: polar residues; sequence PLQSQETETPST. Residues 268-279 show a composition bias toward basic and acidic residues; sequence KDERRPQALVRT.

In terms of tissue distribution, expressed in proximal tubules of the kidney.

The protein localises to the cell membrane. It is found in the cytoplasmic vesicle. May be involved in tuning the metabolism, energy expenditure, and excretion processes. This chain is Factor associated with metabolism and energy, found in Mus musculus (Mouse).